Here is a 152-residue protein sequence, read N- to C-terminus: MFDILVYLFENYYTPQACPAADVLAKRLAAAGFEHEDIDDALGWLYGLAETTERCVDLAQAPSSGIRIYTDSEYQQLGTESIGFIAFLESAGVLPAPLREIVIDRALAAPETPVSLAKTKIIALMVLWSQEAEIDNLVLEELLDDDGARRLH.

It belongs to the Smg family.

The protein is Protein Smg homolog of Bordetella petrii (strain ATCC BAA-461 / DSM 12804 / CCUG 43448).